The primary structure comprises 160 residues: 2-C-methyl-D-erythritol 2,4-cyclodiphosphate synthase (160 aa).

2 residues coordinate a divalent metal cation: aspartate 11 and histidine 13. 4-CDP-2-C-methyl-D-erythritol 2-phosphate-binding positions include 11–13 (DIH) and 37–38 (HS). Residue histidine 45 coordinates a divalent metal cation. Residues 59–61 (DIG), 135–138 (TTNE), and arginine 145 contribute to the 4-CDP-2-C-methyl-D-erythritol 2-phosphate site.

Belongs to the IspF family. Homotrimer. The cofactor is a divalent metal cation.

It carries out the reaction 4-CDP-2-C-methyl-D-erythritol 2-phosphate = 2-C-methyl-D-erythritol 2,4-cyclic diphosphate + CMP. It functions in the pathway isoprenoid biosynthesis; isopentenyl diphosphate biosynthesis via DXP pathway; isopentenyl diphosphate from 1-deoxy-D-xylulose 5-phosphate: step 4/6. Involved in the biosynthesis of isopentenyl diphosphate (IPP) and dimethylallyl diphosphate (DMAPP), two major building blocks of isoprenoid compounds. Catalyzes the conversion of 4-diphosphocytidyl-2-C-methyl-D-erythritol 2-phosphate (CDP-ME2P) to 2-C-methyl-D-erythritol 2,4-cyclodiphosphate (ME-CPP) with a corresponding release of cytidine 5-monophosphate (CMP). This is 2-C-methyl-D-erythritol 2,4-cyclodiphosphate synthase from Nostoc punctiforme (strain ATCC 29133 / PCC 73102).